The chain runs to 256 residues: Ubiquinone/menaquinone biosynthesis C-methyltransferase UbiE (256 aa).

S-adenosyl-L-methionine contacts are provided by residues T79, D100, and 128-129 (DA).

Belongs to the class I-like SAM-binding methyltransferase superfamily. MenG/UbiE family.

The enzyme catalyses a 2-demethylmenaquinol + S-adenosyl-L-methionine = a menaquinol + S-adenosyl-L-homocysteine + H(+). The catalysed reaction is a 2-methoxy-6-(all-trans-polyprenyl)benzene-1,4-diol + S-adenosyl-L-methionine = a 5-methoxy-2-methyl-3-(all-trans-polyprenyl)benzene-1,4-diol + S-adenosyl-L-homocysteine + H(+). It functions in the pathway quinol/quinone metabolism; menaquinone biosynthesis; menaquinol from 1,4-dihydroxy-2-naphthoate: step 2/2. It participates in cofactor biosynthesis; ubiquinone biosynthesis. Methyltransferase required for the conversion of demethylmenaquinol (DMKH2) to menaquinol (MKH2) and the conversion of 2-polyprenyl-6-methoxy-1,4-benzoquinol (DDMQH2) to 2-polyprenyl-3-methyl-6-methoxy-1,4-benzoquinol (DMQH2). This Pseudomonas savastanoi pv. phaseolicola (strain 1448A / Race 6) (Pseudomonas syringae pv. phaseolicola (strain 1448A / Race 6)) protein is Ubiquinone/menaquinone biosynthesis C-methyltransferase UbiE.